Consider the following 569-residue polypeptide: Sulfite reductase [NADPH] hemoprotein beta-component (569 aa).

[4Fe-4S] cluster-binding residues include C433, C439, C478, and C482. C482 provides a ligand contact to siroheme.

Belongs to the nitrite and sulfite reductase 4Fe-4S domain family. As to quaternary structure, alpha(8)-beta(8). The alpha component is a flavoprotein, the beta component is a hemoprotein. Siroheme is required as a cofactor. The cofactor is [4Fe-4S] cluster.

The enzyme catalyses hydrogen sulfide + 3 NADP(+) + 3 H2O = sulfite + 3 NADPH + 4 H(+). It functions in the pathway sulfur metabolism; hydrogen sulfide biosynthesis; hydrogen sulfide from sulfite (NADPH route): step 1/1. In terms of biological role, component of the sulfite reductase complex that catalyzes the 6-electron reduction of sulfite to sulfide. This is one of several activities required for the biosynthesis of L-cysteine from sulfate. This is Sulfite reductase [NADPH] hemoprotein beta-component from Buchnera aphidicola subsp. Acyrthosiphon pisum (strain Tuc7).